The chain runs to 582 residues: ATP-dependent lipid A-core flippase (582 aa).

6 helical membrane-spanning segments follow: residues 27–48 (LVVSTIALVINAAADTYMISLL), 63–85 (FLRILPFMILGLMFVRGLSGFAS), 144–168 (VSIVREGASIIGLLTLMFWNSWQLS), 170–188 (VLIVVAPVVAFAISFVSKR), 244–266 (LVSAQSIADPVIQMIASLALFAV), and 283–302 (TFTVVFSAMFGLMRPLKALT). The 283-residue stretch at 28–310 (VVSTIALVIN…LTSVTSEFQR (283 aa)) folds into the ABC transmembrane type-1 domain. Residues 342–578 (VDVKDVTFTY…DGAYAQLHRI (237 aa)) enclose the ABC transporter domain. 376–383 (GRSGSGKS) contacts ATP.

Belongs to the ABC transporter superfamily. Lipid exporter (TC 3.A.1.106) family. In terms of assembly, homodimer.

It localises to the cell inner membrane. It catalyses the reaction ATP + H2O + lipid A-core oligosaccharideSide 1 = ADP + phosphate + lipid A-core oligosaccharideSide 2.. Its function is as follows. Involved in lipopolysaccharide (LPS) biosynthesis. Translocates lipid A-core from the inner to the outer leaflet of the inner membrane. Transmembrane domains (TMD) form a pore in the inner membrane and the ATP-binding domain (NBD) is responsible for energy generation. Shows ATPase activity. The chain is ATP-dependent lipid A-core flippase from Vibrio cholerae serotype O1 (strain ATCC 39315 / El Tor Inaba N16961).